Reading from the N-terminus, the 117-residue chain is Large ribosomal subunit protein bL20c (117 aa).

Belongs to the bacterial ribosomal protein bL20 family.

It localises to the plastid. It is found in the chloroplast. In terms of biological role, binds directly to 23S ribosomal RNA and is necessary for the in vitro assembly process of the 50S ribosomal subunit. It is not involved in the protein synthesizing functions of that subunit. The polypeptide is Large ribosomal subunit protein bL20c (Eucalyptus globulus subsp. globulus (Tasmanian blue gum)).